The chain runs to 562 residues: Probable E3 ubiquitin-protein ligase ARI7 (562 aa).

The tract at residues 1–39 (MDSEEDMLDAHDMESGEDDFYSGGTDDCNDSDDGEPDYG) is disordered. Positions 27-39 (DCNDSDDGEPDYG) are enriched in acidic residues. Residues 133–346 (SELTCGICFD…GGFYACNRYE (214 aa)) are TRIAD supradomain. The Zn(2+) site is built by Cys-137, Cys-140, Cys-154, His-156, Cys-159, Cys-162, Cys-182, Cys-187, Cys-226, Cys-231, Cys-248, Cys-250, Cys-255, Cys-258, His-263, Cys-268, Cys-295, and Cys-298. An RING-type 1 zinc finger spans residues 137–187 (CGICFDSYPPEKIASVSCGHPFCTTCWTGYISTTINDGPGCLMLRCPDPSC). The IBR-type zinc-finger motif lies at 206-268 (EKYNRYFLRS…TEEAHRPVDC (63 aa)). The RING-type 2; atypical zinc finger occupies 295–325 (CPRCKRPIEKNQGCMHMTCTPPCKYEFCWLC). Cys-308 is an active-site residue. 6 residues coordinate Zn(2+): Cys-313, Cys-317, Cys-322, Cys-325, His-332, and Cys-342. Residues 524 to 562 (ACSSKSTSSKSTGCSSKTRGKGKGSSRTGGSSRNPDDNL) are disordered. The segment covering 525-540 (CSSKSTSSKSTGCSSK) has biased composition (low complexity).

The protein belongs to the RBR family. Ariadne subfamily. Requires Zn(2+) as cofactor. In terms of tissue distribution, ubiquitous.

The catalysed reaction is [E2 ubiquitin-conjugating enzyme]-S-ubiquitinyl-L-cysteine + [acceptor protein]-L-lysine = [E2 ubiquitin-conjugating enzyme]-L-cysteine + [acceptor protein]-N(6)-ubiquitinyl-L-lysine.. It functions in the pathway protein modification; protein ubiquitination. In terms of biological role, might act as an E3 ubiquitin-protein ligase, or as part of E3 complex, which accepts ubiquitin from specific E2 ubiquitin-conjugating enzymes and then transfers it to substrates. This Arabidopsis thaliana (Mouse-ear cress) protein is Probable E3 ubiquitin-protein ligase ARI7 (ARI7).